The chain runs to 140 residues: Small ribosomal subunit protein uS19 (140 aa).

This sequence belongs to the universal ribosomal protein uS19 family.

In terms of biological role, protein S19 forms a complex with S13 that binds strongly to the 16S ribosomal RNA. This is Small ribosomal subunit protein uS19 from Natronomonas pharaonis (strain ATCC 35678 / DSM 2160 / CIP 103997 / JCM 8858 / NBRC 14720 / NCIMB 2260 / Gabara) (Halobacterium pharaonis).